Here is a 331-residue protein sequence, read N- to C-terminus: DNA-directed RNA polymerase subunit alpha (331 aa).

The segment at 1–242 is alpha N-terminal domain (alpha-NTD); it reads MEKFLRYNIQ…EHYKPIVTEL (242 aa). The segment at 258–331 is alpha C-terminal domain (alpha-CTD); sequence VSSSKSSLAI…RNLKLKEEQN (74 aa).

Belongs to the RNA polymerase alpha chain family. As to quaternary structure, homodimer. The RNAP catalytic core consists of 2 alpha, 1 beta, 1 beta' and 1 omega subunit. When a sigma factor is associated with the core the holoenzyme is formed, which can initiate transcription.

It carries out the reaction RNA(n) + a ribonucleoside 5'-triphosphate = RNA(n+1) + diphosphate. In terms of biological role, DNA-dependent RNA polymerase catalyzes the transcription of DNA into RNA using the four ribonucleoside triphosphates as substrates. In Malacoplasma penetrans (strain HF-2) (Mycoplasma penetrans), this protein is DNA-directed RNA polymerase subunit alpha.